The primary structure comprises 129 residues: AECSVDIAGNDGMQFDKKEITVSKSCKQFTVNLKHPGKLAKNVMGHNWVLTKQADMQGAVNDGMAAGLDNNYVKKDDARVIAHTKVIGGGETDSVTFDVSKLAAGEDYAYFCSFPGHFALMKGVLKLVD.

The 129-residue stretch at 1-129 (AECSVDIAGN…LMKGVLKLVD (129 aa)) folds into the Plastocyanin-like domain. Residues Cys3 and Cys26 are joined by a disulfide bond. The Cu cation site is built by His46, Cys112, His117, and Met121.

The protein resides in the periplasm. Its function is as follows. Transfers electrons from cytochrome c551 to cytochrome oxidase. This is Azurin-1 from Alcaligenes xylosoxydans xylosoxydans (Achromobacter xylosoxidans).